The sequence spans 295 residues: 4-diphosphocytidyl-2-C-methyl-D-erythritol kinase (295 aa).

Lys-22 is an active-site residue. 106-116 (PAGGGFGGGSS) provides a ligand contact to ATP. Asp-148 is an active-site residue.

The protein belongs to the GHMP kinase family. IspE subfamily.

It catalyses the reaction 4-CDP-2-C-methyl-D-erythritol + ATP = 4-CDP-2-C-methyl-D-erythritol 2-phosphate + ADP + H(+). It functions in the pathway isoprenoid biosynthesis; isopentenyl diphosphate biosynthesis via DXP pathway; isopentenyl diphosphate from 1-deoxy-D-xylulose 5-phosphate: step 3/6. In terms of biological role, catalyzes the phosphorylation of the position 2 hydroxy group of 4-diphosphocytidyl-2C-methyl-D-erythritol. This chain is 4-diphosphocytidyl-2-C-methyl-D-erythritol kinase, found in Xanthomonas axonopodis pv. citri (strain 306).